The sequence spans 128 residues: 3-aminoacrylate deaminase RutC (128 aa).

The protein belongs to the RutC family.

The enzyme catalyses (Z)-3-aminoacrylate + H2O + H(+) = 3-oxopropanoate + NH4(+). In terms of biological role, involved in pyrimidine catabolism. Catalyzes the deamination of 3-aminoacrylate to malonic semialdehyde, a reaction that can also occur spontaneously. RutC may facilitate the reaction and modulate the metabolic fitness, rather than catalyzing essential functions. This chain is 3-aminoacrylate deaminase RutC, found in Enterobacter cloacae subsp. cloacae (strain ATCC 13047 / DSM 30054 / NBRC 13535 / NCTC 10005 / WDCM 00083 / NCDC 279-56).